The following is a 78-amino-acid chain: Protein SlyX homolog (78 aa).

Belongs to the SlyX family.

The chain is Protein SlyX homolog from Photobacterium profundum (strain SS9).